The following is a 455-amino-acid chain: ATP-dependent protease ATPase subunit HslU (455 aa).

Residues Ile19 and 61-66 contribute to the ATP site; that span reads GVGKTE. The tract at residues 144–163 is disordered; the sequence is ESKVGFANEPAEDAASKKEK. ATP contacts are provided by Asp268, Glu333, and Arg405.

Belongs to the ClpX chaperone family. HslU subfamily. In terms of assembly, a double ring-shaped homohexamer of HslV is capped on each side by a ring-shaped HslU homohexamer. The assembly of the HslU/HslV complex is dependent on binding of ATP.

The protein localises to the cytoplasm. In terms of biological role, ATPase subunit of a proteasome-like degradation complex; this subunit has chaperone activity. The binding of ATP and its subsequent hydrolysis by HslU are essential for unfolding of protein substrates subsequently hydrolyzed by HslV. HslU recognizes the N-terminal part of its protein substrates and unfolds these before they are guided to HslV for hydrolysis. This Francisella tularensis subsp. novicida (strain U112) protein is ATP-dependent protease ATPase subunit HslU.